The chain runs to 459 residues: MLKLYNSLTRQKEEFKPIQPGKVGMYVCGVTIYDLCHIGHGRTFVAFDMIVRYLRYIGYDVNFHRNITDVDDKIIKRATENGESCDALTERLTQEMYHDFDALNMKRPDFEPRATQHMPEIIEMVERLLERDHAYIADNGDVLFSVASFPEYGRLSGQNLDQLQAGARVEVDENKRDPMDFVLWKMSKPGEPTWDSPWGPGRPGWHIECSAMNSKHLGEHFDIHGGGSDLQFPHHENEIAQSCCAHDTPYVNYWMHTGMVMVDKEKMSKSLNNFFTIRDVLAHYDASTVRYFLLSGHYRSQLNYSEDNLKQAKAALERLYTALKGLDLSVEAAPASEYVAKFKEAMDDDFNTPEAYSVLFDMAREINRLKVDDLAAASALGVSMKQLGDVLGILEQDVDGFFKGEGSDDEVAQIEALIAERNRARTEKDWAAADVARDGLNALGVILEDGPEGTTWRKK.

Cysteine 28 serves as a coordination point for Zn(2+). Positions 30 to 40 match the 'HIGH' region motif; it reads VTIYDLCHIGH. Cysteine 209, histidine 234, and glutamate 238 together coordinate Zn(2+). Positions 266–270 match the 'KMSKS' region motif; it reads KMSKS. Lysine 269 is an ATP binding site.

This sequence belongs to the class-I aminoacyl-tRNA synthetase family. Monomer. It depends on Zn(2+) as a cofactor.

The protein localises to the cytoplasm. The catalysed reaction is tRNA(Cys) + L-cysteine + ATP = L-cysteinyl-tRNA(Cys) + AMP + diphosphate. This is Cysteine--tRNA ligase from Shewanella loihica (strain ATCC BAA-1088 / PV-4).